Here is a 688-residue protein sequence, read N- to C-terminus: MEDSGIQRGIWDGDAKAVQQCLTDIFTSVYTTCDIPENAIFGPCVLSHTSLYDSIAFVALKSTDKRTVPYIFRVDTSAANGSSEGLMWLRLVQSARDKEEQNLEAYIKNGQLFYRSLRRIAKDEELLVWYGKELTELLLLCPSRAHKMNGSSPYTCLECSQRFQFEFPYVAHLRFRCPKRLHSTDANPQDEQGGGLGTKDHGGGGGGKEQQQQQQQQQQEAPLIPGPKFCKAGPIHHYPASSPEASNPPGSAGAGSAKPSTDFHNLARELENSRGSSSCVAAPGVGSGGSGHQEAELSPDGVATGGCKGKRRFPEEAAAEGGGAGLAGGRARFSERPLATSKEELVCTPQQYRAAGSYFGLEENGRLFAPPSPETGEAKRSAFVEVKKAGRAVGLQEEAAATDGAGGTAEDPDAGGGVAGGGSNGSSTPAAGSPGAPEKLLAPRPGGSLPGRLEGGSPARGSAFTSVSQLGGGGGAGTAGTAGGSGGGQTAASDERKSAFSQPARSFSQLSPLVLGQKLGALEPCHPGDGVGPTRLYPAAADPLAVKLQGAADLNGACGPLASGGGGGLPKQSPFLYATAFWPKSSAAAAAAAAAAAGPLQLQLPSALTLLPPSFTSLCLPAQNWCAKCNASFRMTSDLVYHMRSHHKKEYAMEPLVKRRREEKLKCPICNESFRERHHLSRHMTSHN.

The SET domain maps to 16–131 (KAVQQCLTDI…KDEELLVWYG (116 aa)). Y130 serves as a coordination point for S-adenosyl-L-methionine. A C2H2-type 1 zinc finger spans residues 154–182 (YTCLECSQRFQFEFPYVAHLRFRCPKRLH). 2 disordered regions span residues 184–309 (TDAN…GCKG) and 397–506 (EEAA…PARS). Positions 192 to 208 (QGGGLGTKDHGGGGGGK) are enriched in gly residues. Low complexity-rich tracts occupy residues 209-219 (EQQQQQQQQQQ) and 275-284 (GSSSCVAAPG). Composition is skewed to gly residues over residues 414–424 (AGGGVAGGGSN) and 470–489 (LGGG…GGGQ). C2H2-type zinc fingers lie at residues 624–647 (NWCA…RSHH) and 665–687 (LKCP…MTSH).

This sequence belongs to the class V-like SAM-binding methyltransferase superfamily. Interacts with BHLHE22. Interacts with EPM2A and NHLRC1. This interaction sequesters EPM2A and NHLRC1 to the nucleus. In terms of tissue distribution, expressed in brain, heart, liver, testes, retina. Highest expression is observed in the retina and hippocampus; moderately expressed in the cortex and cerebellum. In the retina, it is expressed in bipolar and amacrine cells.

Its subcellular location is the nucleus. Functionally, probable histone methyltransferase, preferentially acting on 'Lys-9' of histone H3. Histone methyltransferase activity has not been confirmed in other species. Involved in the control of steroidogenesis through transcriptional repression of steroidogenesis marker genes such as CYP17A1 and LHCGR. Forms with BHLHE22 a transcriptional repressor complex controlling genes involved in neural development and neuronal differentiation. In the retina, it is required for rod bipolar and type 2 OFF-cone bipolar cell survival. The polypeptide is PR domain zinc finger protein 8 (Prdm8) (Mus musculus (Mouse)).